A 94-amino-acid polypeptide reads, in one-letter code: Co-chaperonin GroES (94 aa).

The protein belongs to the GroES chaperonin family. Heptamer of 7 subunits arranged in a ring. Interacts with the chaperonin GroEL.

It is found in the cytoplasm. In terms of biological role, together with the chaperonin GroEL, plays an essential role in assisting protein folding. The GroEL-GroES system forms a nano-cage that allows encapsulation of the non-native substrate proteins and provides a physical environment optimized to promote and accelerate protein folding. GroES binds to the apical surface of the GroEL ring, thereby capping the opening of the GroEL channel. This is Co-chaperonin GroES from Geobacillus stearothermophilus (Bacillus stearothermophilus).